The primary structure comprises 235 residues: DUP240 protein DFP4 (235 aa).

Topologically, residues 1-44 (MSSELLISNSKPRPEGLRKLCEGETVILPRDITPSKCAYFLKQN) are cytoplasmic. The helical transmembrane segment at 45–65 (IVFISYIFIHIIITIILNRLA) threads the bilayer. Residues 66 to 72 (LSAHGNT) are Extracellular-facing. The chain crosses the membrane as a helical span at residues 73–93 (LIIILAALLITISLFLLLLLP). Residues 94–235 (YLSCSRYKLR…DKYPEMGVTV (142 aa)) lie on the Cytoplasmic side of the membrane.

The protein belongs to the DUP/COS family. In terms of assembly, interacts according to large scale protein interaction studies with BZZ1, SRB4 and SUA7.

It localises to the cell membrane. In Saccharomyces cerevisiae (strain ATCC 204508 / S288c) (Baker's yeast), this protein is DUP240 protein DFP4.